The sequence spans 395 residues: Flap endonuclease 1 (395 aa).

The N-domain stretch occupies residues 1 to 108 (MGILGLSKLL…DELEMRRQKA (108 aa)). Asp-34 contacts Mg(2+). Arg-74 contacts DNA. Asp-90, Glu-162, Glu-164, Asp-183, and Asp-185 together coordinate Mg(2+). Positions 126-257 (MMEKMSKRTV…QKAWEGIQRY (132 aa)) are I-domain. DNA is bound at residue Glu-162. Residues Gly-235 and Asp-237 each coordinate DNA. Asp-237 contacts Mg(2+). An interaction with PCNA region spans residues 340-348 (TQGRLDSFF).

This sequence belongs to the XPG/RAD2 endonuclease family. FEN1 subfamily. In terms of assembly, interacts with PCNA. Three molecules of FEN1 bind to one PCNA trimer with each molecule binding to one PCNA monomer. PCNA stimulates the nuclease activity without altering cleavage specificity. Requires Mg(2+) as cofactor. In terms of processing, phosphorylated. Phosphorylation upon DNA damage induces relocalization to the nuclear plasma.

It is found in the nucleus. The protein resides in the nucleolus. It localises to the nucleoplasm. Its subcellular location is the mitochondrion. Structure-specific nuclease with 5'-flap endonuclease and 5'-3' exonuclease activities involved in DNA replication and repair. During DNA replication, cleaves the 5'-overhanging flap structure that is generated by displacement synthesis when DNA polymerase encounters the 5'-end of a downstream Okazaki fragment. It enters the flap from the 5'-end and then tracks to cleave the flap base, leaving a nick for ligation. Also involved in the long patch base excision repair (LP-BER) pathway, by cleaving within the apurinic/apyrimidinic (AP) site-terminated flap. Acts as a genome stabilization factor that prevents flaps from equilibrating into structures that lead to duplications and deletions. Also possesses 5'-3' exonuclease activity on nicked or gapped double-stranded DNA, and exhibits RNase H activity. Also involved in replication and repair of rDNA and in repairing mitochondrial DNA. The protein is Flap endonuclease 1 of Leishmania infantum.